The chain runs to 145 residues: uncharacterized protein (145 aa).

The tract at residues Met-1–Thr-49 is disordered. The segment covering Asn-22 to Glu-32 has biased composition (basic and acidic residues). Basic residues predominate over residues Arg-33 to Tyr-42. Ser-68 carries the phosphoserine modification. The 77-residue stretch at Pro-69–Val-145 folds into the Cytochrome b5 heme-binding domain. Heme is bound by residues His-104 and His-127.

It belongs to the cytochrome b5 family.

The protein localises to the cytoplasm. This is an uncharacterized protein from Schizosaccharomyces pombe (strain 972 / ATCC 24843) (Fission yeast).